The primary structure comprises 397 residues: Inositol 3-kinase (397 aa).

ATP-binding positions include Ser-228, 278–281 (GAGD), and Asn-305. Catalysis depends on Asp-281, which acts as the Proton acceptor.

The protein belongs to the carbohydrate kinase pfkB family. Expressed in roots, leaf blade shoots, leaf sheath shoots and panicles.

The catalysed reaction is myo-inositol + ATP = 1D-myo-inositol 3-phosphate + ADP + H(+). Kinase that phosphorylates myo-inositol to produce multiple myo-inositol monophosphates. Participates in phytic acid biosynthesis in developing seeds. Phytic acid is the primary storage form of phosphorus in cereal grains and other plant seeds. In Oryza sativa subsp. japonica (Rice), this protein is Inositol 3-kinase.